Reading from the N-terminus, the 447-residue chain is Adenylosuccinate synthetase (447 aa).

Residues 35 to 41 and 63 to 65 each bind GTP; these read GDEGKGK and GHT. The active-site Proton acceptor is the Asp36. Residues Asp36 and Gly63 each contribute to the Mg(2+) site. Residues 36 to 39, 61 to 64, Thr153, Arg167, Asn245, Thr260, and Arg324 each bind IMP; these read DEGK and NAGH. His64 functions as the Proton donor in the catalytic mechanism. 320–326 provides a ligand contact to substrate; that stretch reads VTTKRKR. Residues Arg326, 352-354, and 435-437 each bind GTP; these read KLD and GVG.

It belongs to the adenylosuccinate synthetase family. Homodimer. The cofactor is Mg(2+).

Its subcellular location is the cytoplasm. It catalyses the reaction IMP + L-aspartate + GTP = N(6)-(1,2-dicarboxyethyl)-AMP + GDP + phosphate + 2 H(+). It participates in purine metabolism; AMP biosynthesis via de novo pathway; AMP from IMP: step 1/2. Its function is as follows. Plays an important role in the de novo pathway and in the salvage pathway of purine nucleotide biosynthesis. Catalyzes the first committed step in the biosynthesis of AMP from IMP. In Drosophila sechellia (Fruit fly), this protein is Adenylosuccinate synthetase.